A 758-amino-acid chain; its full sequence is 3-isopropylmalate dehydratase (758 aa).

Residues cysteine 359, cysteine 420, and cysteine 423 each contribute to the [4Fe-4S] cluster site. A phosphoserine mark is found at serine 486 and serine 488.

This sequence belongs to the aconitase/IPM isomerase family. [4Fe-4S] cluster is required as a cofactor.

The catalysed reaction is (2R,3S)-3-isopropylmalate = (2S)-2-isopropylmalate. Its pathway is amino-acid biosynthesis; L-leucine biosynthesis; L-leucine from 3-methyl-2-oxobutanoate: step 2/4. In terms of biological role, catalyzes the isomerization between 2-isopropylmalate and 3-isopropylmalate, via the formation of 2-isopropylmaleate. This Schizosaccharomyces pombe (strain 972 / ATCC 24843) (Fission yeast) protein is 3-isopropylmalate dehydratase (leu2).